A 426-amino-acid polypeptide reads, in one-letter code: Putative phosphate permease CPn_0680/CP_0067/CPj0680/CpB0707 (426 aa).

11 helical membrane passes run 1 to 21 (MLPLIIFVLLCGFYTSWNIGA), 42 to 62 (AVVIAAIFEFFGALLLGDRVA), 87 to 107 (TAALLATGVWLQLASFFGWPV), 112 to 132 (SIVGAVIGFGLVLGKGTIIYW), 137 to 157 (IILISWILSPFMGGCVAYLIF), 180 to 200 (FLAALVIMTLGTVMISGGVIL), 207 to 227 (WAVSGVLVCGLLSYIITFYYV), 260 to 280 (LVVERIFAYLQIIVACFMAFA), 313 to 333 (LMAFGGIGLVIGLAIWGWRVI), 364 to 384 (ILGLPISTTHVVVGAVLGIGL), and 399 to 419 (IVLSWFITLPAGALLSILFFF).

It belongs to the inorganic phosphate transporter (PiT) (TC 2.A.20) family.

The protein localises to the cell membrane. Functionally, potential transporter for phosphate. This Chlamydia pneumoniae (Chlamydophila pneumoniae) protein is Putative phosphate permease CPn_0680/CP_0067/CPj0680/CpB0707.